A 311-amino-acid chain; its full sequence is Methionyl-tRNA formyltransferase (311 aa).

Position 112–115 (112–115) interacts with (6S)-5,6,7,8-tetrahydrofolate; that stretch reads SLLP.

Belongs to the Fmt family.

The catalysed reaction is L-methionyl-tRNA(fMet) + (6R)-10-formyltetrahydrofolate = N-formyl-L-methionyl-tRNA(fMet) + (6S)-5,6,7,8-tetrahydrofolate + H(+). In terms of biological role, attaches a formyl group to the free amino group of methionyl-tRNA(fMet). The formyl group appears to play a dual role in the initiator identity of N-formylmethionyl-tRNA by promoting its recognition by IF2 and preventing the misappropriation of this tRNA by the elongation apparatus. The sequence is that of Methionyl-tRNA formyltransferase from Agrobacterium fabrum (strain C58 / ATCC 33970) (Agrobacterium tumefaciens (strain C58)).